Here is a 386-residue protein sequence, read N- to C-terminus: Cell division protein FtsZ (386 aa).

Residues Gly-20–Asn-24, Gly-107–Gly-109, Glu-138, Arg-142, and Asn-186 contribute to the GTP site. Residues Leu-350 to Ile-377 are disordered.

Belongs to the FtsZ family. As to quaternary structure, homodimer. Polymerizes to form a dynamic ring structure in a strictly GTP-dependent manner. Interacts directly with several other division proteins.

It localises to the cytoplasm. Functionally, essential cell division protein that forms a contractile ring structure (Z ring) at the future cell division site. The regulation of the ring assembly controls the timing and the location of cell division. One of the functions of the FtsZ ring is to recruit other cell division proteins to the septum to produce a new cell wall between the dividing cells. Binds GTP and shows GTPase activity. The sequence is that of Cell division protein FtsZ from Sodalis glossinidius.